Consider the following 572-residue polypeptide: Chromatin assembly factor 1 subunit B (572 aa).

WD repeat units follow at residues 11–54, 64–103, 127–166, 169–208, 228–279, 301–347, and 351–392; these read HNKE…DGKA, RHTK…EPEQ, GHLE…KISI, EHKS…VAFN, FHDD…RPIA, RPVA…PFGY, and IHYH…IPLK. Position 401 is a phosphothreonine (Thr-401). The segment at 403-572 is disordered; the sequence is DTAKKAKNQT…LAPDDSSKTV (170 aa). Polar residues predominate over residues 411 to 430; that stretch reads QTHQGSSPGSRSVEGTPSNR. Ser-416 bears the Phosphoserine mark. Thr-426 carries the phosphothreonine modification. The span at 431-452 shows a compositional bias: low complexity; that stretch reads TQDPSSPCTTPSPTTQSPAPSA. A Phosphoserine modification is found at Ser-436. Residue Thr-440 is modified to Phosphothreonine. Ser-456 and Ser-465 each carry phosphoserine. Lys-501 is modified (N6-acetyllysine). Residues Thr-502 and Thr-510 each carry the phosphothreonine modification. Polar residues predominate over residues 511 to 529; that stretch reads PLKTDTVPNPQPNSGTAPS. Over residues 546-559 the composition is skewed to basic and acidic residues; that stretch reads PELKRPRLEEREGD.

It belongs to the WD repeat HIR1 family. As to quaternary structure, subunit of the CAF-1 complex that contains RBBP4, CHAF1B and CHAF1A. CHAF1A binds directly to CHAF1B. Interacts with histones H3.1, H3.2 and H3.1t.

Its subcellular location is the nucleus. It is found in the cytoplasm. In terms of biological role, acts as a component of the histone chaperone complex chromatin assembly factor 1 (CAF-1), which assembles histone octamers onto DNA during replication and repair. CAF-1 performs the first step of the nucleosome assembly process, bringing newly synthesized histones H3 and H4 to replicating DNA; histones H2A/H2B can bind to this chromatin precursor subsequent to DNA replication to complete the histone octamer. The protein is Chromatin assembly factor 1 subunit B of Mus musculus (Mouse).